Here is a 178-residue protein sequence, read N- to C-terminus: Colicin-A immunity protein (178 aa).

Residues 1–13 (MMNEHSIDTDNRK) are Cytoplasmic-facing. A helical transmembrane segment spans residues 14–37 (ANNALYLFIIIGLIPLLCIFVVYY). The Periplasmic portion of the chain corresponds to 38–68 (KTPDALLLRKIATSTENLPSITSSYNPLMTK). The chain crosses the membrane as a helical span at residues 69–89 (VMDIYCKTAPFLALILYILTF). At 90–105 (KIRKLINNTDRNTVLR) the chain is on the cytoplasmic side. The helical transmembrane segment at 106 to 123 (SCLLSPLVYAAIVYLFCF) threads the bilayer. Over 124-142 (RNFELTTAGRPVRLMATND) the chain is Periplasmic. The chain crosses the membrane as a helical span at residues 143–165 (ATLLLFYIGLYSIIFFTTYITLF). Residues 166–178 (TPVTAFKLLKKRQ) are Cytoplasmic-facing.

It is found in the cell inner membrane. Functionally, this protein is able to protect a cell, which harbors the plasmid ColA encoding colicin A, against colicin A. The protein is Colicin-A immunity protein (cai) of Citrobacter freundii.